The primary structure comprises 360 residues: Phenylalanine--tRNA ligase alpha subunit (360 aa).

Glu260 is a binding site for Mg(2+).

The protein belongs to the class-II aminoacyl-tRNA synthetase family. Phe-tRNA synthetase alpha subunit type 1 subfamily. In terms of assembly, tetramer of two alpha and two beta subunits. Requires Mg(2+) as cofactor.

It is found in the cytoplasm. It carries out the reaction tRNA(Phe) + L-phenylalanine + ATP = L-phenylalanyl-tRNA(Phe) + AMP + diphosphate + H(+). The sequence is that of Phenylalanine--tRNA ligase alpha subunit from Methylobacterium nodulans (strain LMG 21967 / CNCM I-2342 / ORS 2060).